A 311-amino-acid polypeptide reads, in one-letter code: Aspartate carbamoyltransferase catalytic subunit (311 aa).

Carbamoyl phosphate contacts are provided by R55 and T56. K83 is an L-aspartate binding site. Residues R105, H133, and Q136 each contribute to the carbamoyl phosphate site. L-aspartate-binding residues include R166 and R220. Carbamoyl phosphate is bound by residues G261 and P262.

This sequence belongs to the aspartate/ornithine carbamoyltransferase superfamily. ATCase family. As to quaternary structure, heterododecamer (2C3:3R2) of six catalytic PyrB chains organized as two trimers (C3), and six regulatory PyrI chains organized as three dimers (R2).

The enzyme catalyses carbamoyl phosphate + L-aspartate = N-carbamoyl-L-aspartate + phosphate + H(+). It participates in pyrimidine metabolism; UMP biosynthesis via de novo pathway; (S)-dihydroorotate from bicarbonate: step 2/3. Its function is as follows. Catalyzes the condensation of carbamoyl phosphate and aspartate to form carbamoyl aspartate and inorganic phosphate, the committed step in the de novo pyrimidine nucleotide biosynthesis pathway. This Chlorobium chlorochromatii (strain CaD3) protein is Aspartate carbamoyltransferase catalytic subunit.